The following is a 294-amino-acid chain: Indole-3-glycerol phosphate synthase (294 aa).

The protein belongs to the TrpC family.

It catalyses the reaction 1-(2-carboxyphenylamino)-1-deoxy-D-ribulose 5-phosphate + H(+) = (1S,2R)-1-C-(indol-3-yl)glycerol 3-phosphate + CO2 + H2O. The protein operates within amino-acid biosynthesis; L-tryptophan biosynthesis; L-tryptophan from chorismate: step 4/5. This chain is Indole-3-glycerol phosphate synthase, found in Synechococcus sp. (strain RCC307).